A 248-amino-acid chain; its full sequence is Segregation and condensation protein A (248 aa).

This sequence belongs to the ScpA family. In terms of assembly, component of a cohesin-like complex composed of ScpA, ScpB and the Smc homodimer, in which ScpA and ScpB bind to the head domain of Smc. The presence of the three proteins is required for the association of the complex with DNA.

It localises to the cytoplasm. Participates in chromosomal partition during cell division. May act via the formation of a condensin-like complex containing Smc and ScpB that pull DNA away from mid-cell into both cell halves. The chain is Segregation and condensation protein A from Clostridium perfringens (strain ATCC 13124 / DSM 756 / JCM 1290 / NCIMB 6125 / NCTC 8237 / Type A).